A 329-amino-acid polypeptide reads, in one-letter code: Quinone oxidoreductase (329 aa).

The residue at position 2 (Ala2) is an N-acetylalanine. Lys23 is subject to N6-acetyllysine. Residues Tyr53, 158-161, Gly181, His200, Asn229, 246-249, and 269-271 contribute to the NADP(+) site; these read SGGV, VGSR, and VTV. Residue Ser248 is modified to Phosphoserine. Lys296 carries the N6-succinyllysine modification.

This sequence belongs to the zinc-containing alcohol dehydrogenase family. Quinone oxidoreductase subfamily. As to quaternary structure, homotetramer.

It is found in the cytoplasm. It catalyses the reaction 2 a quinone + NADPH + H(+) = 2 a 1,4-benzosemiquinone + NADP(+). Does not have alcohol dehydrogenase activity. Binds NADP and acts through a one-electron transfer process. Orthoquinones, such as 1,2-naphthoquinone or 9,10-phenanthrenequinone, are the best substrates (in vitro). May act in the detoxification of xenobiotics. Interacts with (AU)-rich elements (ARE) in the 3'-UTR of target mRNA species and enhances their stability. NADPH binding interferes with mRNA binding. The chain is Quinone oxidoreductase (CRYZ) from Pongo abelii (Sumatran orangutan).